A 305-amino-acid polypeptide reads, in one-letter code: Large ribosomal subunit protein uL2m (305 aa).

Residues 1 to 60 (MALCALTRALRSLNLAPPTVAAPAPSLFPAAQMMNNGLLQQPSALMLLPCRPVLTSVALN) constitute a mitochondrion transit peptide. The segment at 264-283 (RWLGKRPNSGRWHRKGGWAG) is disordered. Residues 274 to 283 (RWHRKGGWAG) are compositionally biased toward basic residues.

Belongs to the universal ribosomal protein uL2 family. Component of the mitochondrial large ribosomal subunit (mt-LSU). Mature mammalian 55S mitochondrial ribosomes consist of a small (28S) and a large (39S) subunit. The 28S small subunit contains a 12S ribosomal RNA (12S mt-rRNA) and 30 different proteins. The 39S large subunit contains a 16S rRNA (16S mt-rRNA), a copy of mitochondrial valine transfer RNA (mt-tRNA(Val)), which plays an integral structural role, and 52 different proteins.

The protein resides in the mitochondrion. The chain is Large ribosomal subunit protein uL2m (MRPL2) from Homo sapiens (Human).